The sequence spans 109 residues: Movement protein TGB2 (109 aa).

Topologically, residues 1-9 (MPLQPPPDH) are cytoplasmic. Residues 10–30 (TWAVRIIALGLAVTALIFTST) traverse the membrane as a helical segment. Residues 31–71 (RDTSRHVGDPSHSLPFGGHYRDGSKVIHYNSPRSSKPSNHT) are Lumenal-facing. The helical transmembrane segment at 72-92 (PYLLFAPIGIILLIHALHRLG) threads the bilayer. Residues 93–109 (NSAHICRCTHCMPHSQT) are Cytoplasmic-facing.

The protein belongs to the Tymovirales TGBp2 protein family.

It localises to the host endoplasmic reticulum membrane. In terms of biological role, plays a role in viral cell-to-cell propagation, by facilitating genome transport to neighboring plant cells through plasmosdesmata,. The polypeptide is Movement protein TGB2 (Citrus (ICRSV)).